Here is a 472-residue protein sequence, read N- to C-terminus: 3-isopropylmalate dehydratase large subunit (472 aa).

Residues cysteine 346, cysteine 406, and cysteine 409 each coordinate [4Fe-4S] cluster.

It belongs to the aconitase/IPM isomerase family. LeuC type 1 subfamily. In terms of assembly, heterodimer of LeuC and LeuD. Requires [4Fe-4S] cluster as cofactor.

It carries out the reaction (2R,3S)-3-isopropylmalate = (2S)-2-isopropylmalate. It participates in amino-acid biosynthesis; L-leucine biosynthesis; L-leucine from 3-methyl-2-oxobutanoate: step 2/4. In terms of biological role, catalyzes the isomerization between 2-isopropylmalate and 3-isopropylmalate, via the formation of 2-isopropylmaleate. This is 3-isopropylmalate dehydratase large subunit from Thermus thermophilus (strain ATCC BAA-163 / DSM 7039 / HB27).